A 464-amino-acid polypeptide reads, in one-letter code: 3-isopropylmalate dehydratase large subunit (464 aa).

[4Fe-4S] cluster is bound by residues Cys337, Cys397, and Cys400.

Belongs to the aconitase/IPM isomerase family. LeuC type 1 subfamily. As to quaternary structure, heterodimer of LeuC and LeuD. [4Fe-4S] cluster is required as a cofactor.

The catalysed reaction is (2R,3S)-3-isopropylmalate = (2S)-2-isopropylmalate. It functions in the pathway amino-acid biosynthesis; L-leucine biosynthesis; L-leucine from 3-methyl-2-oxobutanoate: step 2/4. Functionally, catalyzes the isomerization between 2-isopropylmalate and 3-isopropylmalate, via the formation of 2-isopropylmaleate. This Bacillus thuringiensis subsp. konkukian (strain 97-27) protein is 3-isopropylmalate dehydratase large subunit.